A 277-amino-acid polypeptide reads, in one-letter code: Undecaprenyl-diphosphatase (277 aa).

Helical transmembrane passes span 47 to 67, 85 to 105, 108 to 128, 183 to 203, 218 to 238, and 249 to 269; these read FNII…RGKI, ANLL…ADLI, WLFN…VMLW, AATE…AVYS, VFAV…RALL, and FAWY…FHLI.

This sequence belongs to the UppP family.

Its subcellular location is the cell inner membrane. The enzyme catalyses di-trans,octa-cis-undecaprenyl diphosphate + H2O = di-trans,octa-cis-undecaprenyl phosphate + phosphate + H(+). Functionally, catalyzes the dephosphorylation of undecaprenyl diphosphate (UPP). Confers resistance to bacitracin. The sequence is that of Undecaprenyl-diphosphatase from Pseudomonas aeruginosa (strain UCBPP-PA14).